The sequence spans 461 residues: Tumor necrosis factor receptor superfamily member 1A (461 aa).

Residues Met-1–Gly-29 form the signal peptide. At Leu-30 to Thr-210 the chain is on the extracellular side. 4 TNFR-Cys repeats span residues Leu-43–Arg-82, Glu-83–Cys-125, Gly-126–Cys-166, and Asn-167–Pro-195. 7 cysteine pairs are disulfide-bonded: Cys-44/Cys-58, Cys-59/Cys-72, Cys-62/Cys-81, Cys-84/Cys-99, Cys-102/Cys-117, Cys-105/Cys-125, and Cys-127/Cys-143. N-linked (GlcNAc...) asparagine glycosylation occurs at Asn-54. The N-linked (GlcNAc...) asparagine glycan is linked to Asn-86. Residues Asn-145 and Asn-151 are each glycosylated (N-linked (GlcNAc...) asparagine). Disulfide bonds link Cys-146–Cys-158, Cys-149–Cys-166, Cys-168–Cys-179, Cys-182–Cys-194, and Cys-185–Cys-190. The chain crosses the membrane as a helical span at residues Val-211–Cys-233. Over Arg-234–Arg-461 the chain is Cytoplasmic. The N-SMase activation domain (NSD) stretch occupies residues Leu-340–Ala-350. Positions Pro-362–Leu-447 constitute a Death domain.

In terms of assembly, binding of TNF to the extracellular domain leads to homotrimerization. The aggregated death domains provide a novel molecular interface that interacts specifically with the death domain of TRADD. Various TRADD-interacting proteins such as TRAFS, RIPK1 and possibly FADD, are recruited to the complex by their association with TRADD. This complex activates at least two distinct signaling cascades, apoptosis and NF-kappa-B signaling. Interacts with BAG4, BABAM2, FEM1B, GRB2, SQSTM1 and TRPC4AP. Interacts with DAB2IP. Interacts directly with NOL3 (via CARD domain); inhibits TNF-signaling pathway. Interacts with SH3RF2, TRADD and RIPK1. SH3RF2 facilitates the recruitment of RIPK1 and TRADD to TNFRSF1A in a TNF-alpha-dependent process. Interacts with PGLYRP1; this interaction is important for cell death induction. Interacts (via death domain) with MADD (via death domain).

The protein resides in the cell membrane. The protein localises to the golgi apparatus membrane. Receptor for TNFSF2/TNF-alpha and homotrimeric TNFSF1/lymphotoxin-alpha. The adapter molecule FADD recruits caspase-8 to the activated receptor. The resulting death-inducing signaling complex (DISC) performs caspase-8 proteolytic activation which initiates the subsequent cascade of caspases (aspartate-specific cysteine proteases) mediating apoptosis. In Sus scrofa (Pig), this protein is Tumor necrosis factor receptor superfamily member 1A (TNFRSF1A).